We begin with the raw amino-acid sequence, 113 residues long: U11-theraphotoxin-Hhn1a (113 aa).

Residues 1 to 21 form the signal peptide; that stretch reads MNTVRVTFLLVFVLPVSLGQA. Residues 22–74 constitute a propeptide that is removed on maturation; it reads DKDENRMEMQEKTEQGKSYLDFAENLLLQKLEELEAKLLEEDSEESRNSRQKR. A compositionally biased stretch (basic and acidic residues) spans 60–69; the sequence is LEEDSEESRN. The interval 60–83 is disordered; the sequence is LEEDSEESRNSRQKRCIGEGVPCD. 3 disulfides stabilise this stretch: Cys75-Cys90, Cys82-Cys95, and Cys89-Cys110.

This sequence belongs to the neurotoxin 14 (magi-1) family. 01 (HNTX-16) subfamily. Expressed by the venom gland.

It is found in the secreted. Its function is as follows. Probable ion channel inhibitor. The chain is U11-theraphotoxin-Hhn1a from Cyriopagopus hainanus (Chinese bird spider).